The sequence spans 556 residues: GDP-Man:Man(3)GlcNAc(2)-PP-Dol alpha-1,2-mannosyltransferase (556 aa).

Residues 1 to 7 lie on the Lumenal side of the membrane; that stretch reads MANGLFT. The chain crosses the membrane as a helical span at residues 8–28; sequence YVAISLFTIGPLLALFIPFVW. The Cytoplasmic portion of the chain corresponds to 29–184; sequence RLVGSSLGWY…RWVLASTWPY (156 aa). A compositionally biased stretch (basic and acidic residues) spans 64-79; sequence SKSAKGRKAEKEDRDT. The segment at 64 to 86 is disordered; that stretch reads SKSAKGRKAEKEDRDTFNNTEAT. Residues 185–205 constitute an intramembrane region (helical); the sequence is FTLAGQSFGSLIMAWDAFSLL. At 206 to 454 the chain is on the cytoplasmic side; sequence VPDIFVDTMG…VGVNGMWNEH (249 aa). An intramembrane region (helical) is located at residues 455–475; it reads FGIGVVEYQAAGLISVVHDSG. The Cytoplasmic segment spans residues 476–556; that stretch reads GPKLDIVVEV…KAVEKPKSRQ (81 aa).

Belongs to the glycosyltransferase group 1 family. Glycosyltransferase 4 subfamily.

The protein resides in the endoplasmic reticulum membrane. It catalyses the reaction an alpha-D-Man-(1-&gt;3)-[alpha-D-Man-(1-&gt;6)]-beta-D-Man-(1-&gt;4)-beta-D-GlcNAc-(1-&gt;4)-alpha-D-GlcNAc-diphospho-di-trans,poly-cis-dolichol + 2 GDP-alpha-D-mannose = an alpha-D-Man-(1-&gt;2)-alpha-D-Man-(1-&gt;2)-alpha-D-Man-(1-&gt;3)-[alpha-D-Man-(1-&gt;6)]-beta-D-Man-(1-&gt;4)-beta-D-GlcNAc-(1-&gt;4)-alpha-D-GlcNAc-diphospho-di-trans,poly-cis-dolichol + 2 GDP + 2 H(+). It functions in the pathway protein modification; protein glycosylation. Its function is as follows. GDP-Man:Man(3)GlcNAc(2)-PP-Dol alpha-1,2-mannosyltransferase that operates in the biosynthetic pathway of dolichol-linked oligosaccharides, the glycan precursors employed in protein asparagine (N)-glycosylation. The assembly of dolichol-linked oligosaccharides begins on the cytosolic side of the endoplasmic reticulum membrane and finishes in its lumen. The sequential addition of sugars to dolichol pyrophosphate produces dolichol-linked oligosaccharides containing fourteen sugars, including two GlcNAcs, nine mannoses and three glucoses. Once assembled, the oligosaccharide is transferred from the lipid to nascent proteins by oligosaccharyltransferases. Catalyzes, on the cytoplasmic face of the endoplasmic reticulum, the addition of the fourth and fifth mannose residues to the dolichol-linked oligosaccharide chain, to produce Man(5)GlcNAc(2)-PP-dolichol core oligosaccharide. The polypeptide is GDP-Man:Man(3)GlcNAc(2)-PP-Dol alpha-1,2-mannosyltransferase (alg-11) (Neurospora crassa (strain ATCC 24698 / 74-OR23-1A / CBS 708.71 / DSM 1257 / FGSC 987)).